The primary structure comprises 146 residues: MQKKIIVYTDGACSGNPGKGGWGALLMYGASTREISGYSPATTNNRMELSAAIEALETLKEPCIVHLYSDSSYLVNAINEGWLKRWTANNWKTAAKKSVENIDLWQKILTLIKLHDVTFHKVKGHSDNPYNNRCDELARQAIKNNR.

The RNase H type-1 domain occupies 1 to 143 (MQKKIIVYTD…CDELARQAIK (143 aa)). D10, E48, D70, and D135 together coordinate Mg(2+).

This sequence belongs to the RNase H family. In terms of assembly, monomer. Mg(2+) is required as a cofactor.

The protein resides in the cytoplasm. The enzyme catalyses Endonucleolytic cleavage to 5'-phosphomonoester.. In terms of biological role, endonuclease that specifically degrades the RNA of RNA-DNA hybrids. The protein is Ribonuclease H of Chlorobium phaeobacteroides (strain DSM 266 / SMG 266 / 2430).